The chain runs to 138 residues: Large ribosomal subunit protein bL17 (138 aa).

This sequence belongs to the bacterial ribosomal protein bL17 family. Part of the 50S ribosomal subunit. Contacts protein L32.

The protein is Large ribosomal subunit protein bL17 of Jannaschia sp. (strain CCS1).